The sequence spans 75 residues: Cytochrome c oxidase subunit 6C (75 aa).

The Mitochondrial matrix portion of the chain corresponds to 1 to 13 (MAPEVLPKPQMRG). The chain crosses the membrane as a helical span at residues 14-54 (LLARRLRFHMVTGFVLSLGVAALYKVGVADKRKKAYADFYR). The Mitochondrial intermembrane portion of the chain corresponds to 55–75 (NYDAMKDFEEMRKAGIFQSVK).

Belongs to the cytochrome c oxidase subunit 6c family. In terms of assembly, component of the cytochrome c oxidase (complex IV, CIV), a multisubunit enzyme composed of 14 subunits. The complex is composed of a catalytic core of 3 subunits MT-CO1, MT-CO2 and MT-CO3, encoded in the mitochondrial DNA, and 11 supernumerary subunits COX4I, COX5A, COX5B, COX6A, COX6B, COX6C, COX7A, COX7B, COX7C, COX8 and NDUFA4, which are encoded in the nuclear genome. The complex exists as a monomer or a dimer and forms supercomplexes (SCs) in the inner mitochondrial membrane with NADH-ubiquinone oxidoreductase (complex I, CI) and ubiquinol-cytochrome c oxidoreductase (cytochrome b-c1 complex, complex III, CIII), resulting in different assemblies (supercomplex SCI(1)III(2)IV(1) and megacomplex MCI(2)III(2)IV(2)).

The protein resides in the mitochondrion inner membrane. The protein operates within energy metabolism; oxidative phosphorylation. In terms of biological role, component of the cytochrome c oxidase, the last enzyme in the mitochondrial electron transport chain which drives oxidative phosphorylation. The respiratory chain contains 3 multisubunit complexes succinate dehydrogenase (complex II, CII), ubiquinol-cytochrome c oxidoreductase (cytochrome b-c1 complex, complex III, CIII) and cytochrome c oxidase (complex IV, CIV), that cooperate to transfer electrons derived from NADH and succinate to molecular oxygen, creating an electrochemical gradient over the inner membrane that drives transmembrane transport and the ATP synthase. Cytochrome c oxidase is the component of the respiratory chain that catalyzes the reduction of oxygen to water. Electrons originating from reduced cytochrome c in the intermembrane space (IMS) are transferred via the dinuclear copper A center (CU(A)) of subunit 2 and heme A of subunit 1 to the active site in subunit 1, a binuclear center (BNC) formed by heme A3 and copper B (CU(B)). The BNC reduces molecular oxygen to 2 water molecules using 4 electrons from cytochrome c in the IMS and 4 protons from the mitochondrial matrix. This chain is Cytochrome c oxidase subunit 6C (COX6C), found in Macaca silenus (Lion-tailed macaque).